Here is a 419-residue protein sequence, read N- to C-terminus: UDP-N-acetylglucosamine 1-carboxyvinyltransferase 2 (419 aa).

Lys22 to Asn23 serves as a coordination point for phosphoenolpyruvate. UDP-N-acetyl-alpha-D-glucosamine is bound at residue Arg92. Cys116 (proton donor) is an active-site residue. Position 116 is a 2-(S-cysteinyl)pyruvic acid O-phosphothioketal (Cys116). UDP-N-acetyl-alpha-D-glucosamine is bound by residues Arg121–Leu125, Asp306, and Ile328.

Belongs to the EPSP synthase family. MurA subfamily.

The protein resides in the cytoplasm. The enzyme catalyses phosphoenolpyruvate + UDP-N-acetyl-alpha-D-glucosamine = UDP-N-acetyl-3-O-(1-carboxyvinyl)-alpha-D-glucosamine + phosphate. It functions in the pathway cell wall biogenesis; peptidoglycan biosynthesis. Its function is as follows. Cell wall formation. Adds enolpyruvyl to UDP-N-acetylglucosamine. The protein is UDP-N-acetylglucosamine 1-carboxyvinyltransferase 2 of Streptococcus pneumoniae (strain ATCC BAA-255 / R6).